Here is a 579-residue protein sequence, read N- to C-terminus: uncharacterized protein (579 aa).

The GGDEF domain maps to 449–577; the sequence is QKGVFILVDI…GKNRLMIHDS (129 aa).

This is an uncharacterized protein from Bacillus subtilis (strain 168).